The following is a 304-amino-acid chain: N-acetylmuramic acid 6-phosphate etherase (304 aa).

The 164-residue stretch at 57 to 220 (AVKGLSAGGR…STATMVGLGK (164 aa)) folds into the SIS domain. Glu-85 serves as the catalytic Proton donor. Glu-116 is a catalytic residue.

This sequence belongs to the GCKR-like family. MurNAc-6-P etherase subfamily. Homodimer.

It catalyses the reaction N-acetyl-D-muramate 6-phosphate + H2O = N-acetyl-D-glucosamine 6-phosphate + (R)-lactate. Its pathway is amino-sugar metabolism; N-acetylmuramate degradation. Specifically catalyzes the cleavage of the D-lactyl ether substituent of MurNAc 6-phosphate, producing GlcNAc 6-phosphate and D-lactate. The protein is N-acetylmuramic acid 6-phosphate etherase of Cutibacterium acnes (strain DSM 16379 / KPA171202) (Propionibacterium acnes).